The sequence spans 148 residues: Ribonuclease P protein component (148 aa).

A disordered region spans residues 119 to 148; that stretch reads PLPAAPGTMPPARAPRPSSLSPTEPDPRSD.

The protein belongs to the RnpA family. Consists of a catalytic RNA component (M1 or rnpB) and a protein subunit.

The catalysed reaction is Endonucleolytic cleavage of RNA, removing 5'-extranucleotides from tRNA precursor.. Its function is as follows. RNaseP catalyzes the removal of the 5'-leader sequence from pre-tRNA to produce the mature 5'-terminus. It can also cleave other RNA substrates such as 4.5S RNA. The protein component plays an auxiliary but essential role in vivo by binding to the 5'-leader sequence and broadening the substrate specificity of the ribozyme. This Xanthomonas campestris pv. campestris (strain 8004) protein is Ribonuclease P protein component.